The following is a 143-amino-acid chain: Large ribosomal subunit protein uL15 (143 aa).

Residues 1-51 (MELNTIKPASGAKHAKRRVGRGIGSGLGKTAGRGHKGQKSRAGGYHKVGFE) are disordered. Residues 21–31 (RGIGSGLGKTA) are compositionally biased toward gly residues.

Belongs to the universal ribosomal protein uL15 family. In terms of assembly, part of the 50S ribosomal subunit.

Binds to the 23S rRNA. The sequence is that of Large ribosomal subunit protein uL15 from Methylibium petroleiphilum (strain ATCC BAA-1232 / LMG 22953 / PM1).